A 1090-amino-acid polypeptide reads, in one-letter code: DNA damage-binding protein 1 (1090 aa).

It belongs to the DDB1 family. Component of the UV-DDB complex, which is composed of DDB1 and DDB2. Expressed in proliferating tissues. Highly expressed in shoot apical meristem (SAM). Expressed in roots, young leaves, flag leaves, and panicles. Not detected in mature leaves.

It localises to the nucleus. In terms of biological role, required for DNA repair. Binds to DDB2 to form the UV-damaged DNA-binding protein complex (the UV-DDB complex). The UV-DDB complex may recognize UV-induced DNA damage and recruit proteins of the nucleotide excision repair pathway (the NER pathway) to initiate DNA repair. May function as the substrate recognition module for a DCX (DDB1-CUL4-X-box) E3 ubiquitin-protein ligase complex. This Oryza sativa subsp. japonica (Rice) protein is DNA damage-binding protein 1.